A 157-amino-acid chain; its full sequence is uncharacterized protein (157 aa).

This is an uncharacterized protein from Magallana gigas (Pacific oyster).